A 702-amino-acid polypeptide reads, in one-letter code: Methionine--tRNA ligase (702 aa).

The short motif at 14-24 is the 'HIGH' region element; it reads PYANGPVHLGH. 4 residues coordinate Zn(2+): C146, C149, C159, and C162. Positions 344-348 match the 'KMSKS' region motif; it reads KFSKS. ATP is bound at residue K347. Residues 601-702 enclose the tRNA-binding domain; it reads DFQKVDLRAA…GEKINGSSVQ (102 aa).

It belongs to the class-I aminoacyl-tRNA synthetase family. MetG type 1 subfamily. In terms of assembly, homodimer. Zn(2+) is required as a cofactor.

It is found in the cytoplasm. It catalyses the reaction tRNA(Met) + L-methionine + ATP = L-methionyl-tRNA(Met) + AMP + diphosphate. In terms of biological role, is required not only for elongation of protein synthesis but also for the initiation of all mRNA translation through initiator tRNA(fMet) aminoacylation. In Chlorobium phaeovibrioides (strain DSM 265 / 1930) (Prosthecochloris vibrioformis (strain DSM 265)), this protein is Methionine--tRNA ligase.